The primary structure comprises 84 residues: UPF0457 protein BT9727_3043 (84 aa).

This sequence belongs to the UPF0457 family.

The sequence is that of UPF0457 protein BT9727_3043 from Bacillus thuringiensis subsp. konkukian (strain 97-27).